The following is a 2319-amino-acid chain: Neurogenic locus notch homolog protein 3 (2319 aa).

The segment covering 1 to 14 (MGPGARGRRRRRRL) has biased composition (basic residues). The tract at residues 1–20 (MGPGARGRRRRRRLMALPPP) is disordered. The first 40 residues, 1-40 (MGPGARGRRRRRRLMALPPPPPPMRALPLLLLLLAGLGAA), serve as a signal peptide directing secretion. EGF-like domains lie at 41–79 (APPC…ERCQ), 80–120 (LEDP…PDCS), and 121–158 (LPDP…RNCR). Over 41-1645 (APPCLDGSPC…LEPPEQSVPL (1605 aa)) the chain is Extracellular. 99 cysteine pairs are disulfide-bonded: cysteine 44–cysteine 56, cysteine 50–cysteine 67, cysteine 69–cysteine 78, cysteine 84–cysteine 95, cysteine 89–cysteine 108, cysteine 110–cysteine 119, cysteine 125–cysteine 136, cysteine 130–cysteine 146, cysteine 148–cysteine 157, cysteine 164–cysteine 176, cysteine 170–cysteine 185, cysteine 187–cysteine 196, cysteine 203–cysteine 214, cysteine 208–cysteine 224, cysteine 226–cysteine 235, cysteine 242–cysteine 253, cysteine 247–cysteine 262, cysteine 264–cysteine 273, cysteine 280–cysteine 293, cysteine 287–cysteine 302, cysteine 304–cysteine 313, cysteine 320–cysteine 331, cysteine 325–cysteine 340, cysteine 342–cysteine 351, cysteine 357–cysteine 368, cysteine 362–cysteine 379, cysteine 381–cysteine 390, cysteine 397–cysteine 410, cysteine 404–cysteine 419, cysteine 421–cysteine 430, cysteine 437–cysteine 448, cysteine 442–cysteine 457, cysteine 459–cysteine 468, cysteine 475–cysteine 486, cysteine 480–cysteine 495, cysteine 497–cysteine 506, cysteine 513–cysteine 524, cysteine 518–cysteine 533, cysteine 535–cysteine 544, cysteine 551–cysteine 561, cysteine 556–cysteine 570, cysteine 572–cysteine 581, cysteine 588–cysteine 599, cysteine 593–cysteine 608, cysteine 610–cysteine 619, cysteine 626–cysteine 636, cysteine 631–cysteine 645, cysteine 647–cysteine 656, cysteine 663–cysteine 674, cysteine 668–cysteine 683, cysteine 685–cysteine 694, cysteine 701–cysteine 711, cysteine 706–cysteine 720, cysteine 722–cysteine 731, cysteine 740–cysteine 751, cysteine 745–cysteine 760, cysteine 762–cysteine 771, cysteine 777–cysteine 788, cysteine 782–cysteine 798, cysteine 800–cysteine 809, cysteine 816–cysteine 828, cysteine 822–cysteine 837, cysteine 839–cysteine 848, cysteine 855–cysteine 866, cysteine 860–cysteine 875, cysteine 877–cysteine 886, cysteine 893–cysteine 903, cysteine 898–cysteine 912, cysteine 914–cysteine 923, cysteine 930–cysteine 941, cysteine 935–cysteine 950, cysteine 952–cysteine 961, cysteine 968–cysteine 979, cysteine 973–cysteine 988, cysteine 990–cysteine 999, cysteine 1006–cysteine 1017, cysteine 1011–cysteine 1024, cysteine 1026–cysteine 1035, cysteine 1042–cysteine 1063, cysteine 1057–cysteine 1072, cysteine 1074–cysteine 1083, cysteine 1090–cysteine 1101, cysteine 1095–cysteine 1110, cysteine 1112–cysteine 1121, cysteine 1128–cysteine 1139, cysteine 1133–cysteine 1148, cysteine 1150–cysteine 1159, cysteine 1166–cysteine 1184, cysteine 1178–cysteine 1193, cysteine 1195–cysteine 1204, cysteine 1211–cysteine 1224, cysteine 1216–cysteine 1234, cysteine 1236–cysteine 1245, cysteine 1252–cysteine 1263, cysteine 1257–cysteine 1277, cysteine 1279–cysteine 1288, cysteine 1295–cysteine 1306, cysteine 1300–cysteine 1315, and cysteine 1317–cysteine 1326. The EGF-like 4; calcium-binding domain occupies 160–197 (DIDECRAGASCRHGGTCINTPGSFHCLCPLGYTGLLCE). In terms of domain architecture, EGF-like 5 spans 199 to 236 (PIVPCAPSPCRNGGTCRQSSDVTYDCACLPGFEGQNCE). In terms of domain architecture, EGF-like 6; calcium-binding spans 238–274 (NVDDCPGHRCLNGGTCVDGVNTYNCQCPPEWTGQFCT). Positions 276-314 (DVDECQLQPNACHNGGTCFNLLGGHSCVCVNGWTGESCS) constitute an EGF-like 7 domain. Residues 316-352 (NIDDCATAVCFHGATCHDRVASFYCACPMGKTGLLCH) enclose the EGF-like 8; calcium-binding domain. In terms of domain architecture, EGF-like 9 spans 353–391 (LDDACVSNPCHEDAICDTNPVSGRAICTCPPGFTGGACD). The EGF-like 10; calcium-binding domain occupies 393 to 431 (DVDECSIGANPCEHLGRCVNTQGSFLCQCGRGYTGPRCE). Residues 433 to 469 (DVNECLSGPCRNQATCLDRIGQFTCICMAGFTGTFCE) enclose the EGF-like 11; calcium-binding domain. In terms of domain architecture, EGF-like 12; calcium-binding spans 471–507 (DIDECQSSPCVNGGVCKDRVNGFSCTCPSGFSGSTCQ). An EGF-like 13; calcium-binding domain is found at 509–545 (DVDECASTPCRNGAKCVDQPDGYECRCAEGFEGTLCE). The region spanning 547–582 (NVDDCSPDPCHHGRCVDGIASFSCACAPGYTGIRCE) is the EGF-like 14; calcium-binding domain. The 37-residue stretch at 584 to 620 (QVDECRSQPCRYGGKCLDLVDKYLCRCPPGTTGVNCE) folds into the EGF-like 15; calcium-binding domain. Residues 622 to 657 (NIDDCASNPCTFGVCRDGINRYDCVCQPGFTGPLCN) form the EGF-like 16; calcium-binding domain. The region spanning 659–695 (EINECASSPCGEGGSCVDGENGFHCLCPPGSLPPLCL) is the EGF-like 17; calcium-binding domain. 3 consecutive EGF-like domains span residues 697–732 (ANHP…PRCS), 736–772 (APDA…HQCE), and 773–810 (VLSP…PRCQ). The 38-residue stretch at 812–849 (DVDECAGASPCGPHGTCTNLPGSFRCICHGGYTGPFCD) folds into the EGF-like 21; calcium-binding domain. The 37-residue stretch at 851-887 (DIDDCDPNPCLNGGSCQDGVGSFSCSCLSGFAGPRCA) folds into the EGF-like 22; calcium-binding domain. In terms of domain architecture, EGF-like 23; calcium-binding spans 889–924 (DVDECLSSPCGPGTCTDHVASFTCTCPPGYGGFHCE). 5 EGF-like domains span residues 926–962 (DLLD…THCQ), 964–1000 (KVDP…NQCQ), 1002–1036 (PVDW…PLCD), 1038–1084 (PSLP…SHCE), and 1086–1122 (EVDP…DSCE). Residues 1124-1160 (DVDECASQPCQNGGSCIDLVAHYLCSCPPGTLGVLCE) enclose the EGF-like 29; calcium-binding domain. The EGF-like 30; calcium-binding domain maps to 1162–1205 (NEDDCGPGPSLDSGLRCLHNGTCVDLVGGFRCNCPPGYTGLHCE). N-linked (GlcNAc...) asparagine glycosylation is present at asparagine 1181. EGF-like domains are found at residues 1207–1246 (DINE…PRCQ), 1248–1289 (ALFP…LRCE), 1291–1327 (VARS…PSCR), and 1337–1375 (TNTS…PRCE). Asparagine 1338 carries N-linked (GlcNAc...) asparagine glycosylation. 12 disulfides stabilise this stretch: cysteine 1341–cysteine 1352, cysteine 1346–cysteine 1363, cysteine 1365–cysteine 1374, cysteine 1389–cysteine 1412, cysteine 1394–cysteine 1407, cysteine 1403–cysteine 1419, cysteine 1430–cysteine 1453, cysteine 1435–cysteine 1448, cysteine 1444–cysteine 1460, cysteine 1469–cysteine 1495, cysteine 1477–cysteine 1490, and cysteine 1486–cysteine 1502. LNR repeat units lie at residues 1389–1429 (CPRA…PWRQ), 1430–1467 (CEAL…GRDR), and 1469–1507 (CNPV…SEVP). Asparagine 1440 carries an N-linked (GlcNAc...) asparagine glycan. Residues 1646-1666 (LPLLVAGAVFLLVIFVLGVMV) traverse the membrane as a helical segment. The Cytoplasmic segment spans residues 1667–2319 (ARRKREHSTL…EVTPKRQVMA (653 aa)). ANK repeat units lie at residues 1840–1869 (TGET…DTNA), 1873–1903 (SGRT…DLDA), 1907–1936 (DGST…DVNA), 1940–1969 (LGKS…NKDM), and 1973–2002 (KEET…NREI). 2 disordered regions span residues 2026 to 2046 (LDQP…PLLC) and 2059 to 2129 (QSGT…EGPY). The span at 2029–2046 (PSGPRSPSGPHGLGPLLC) shows a compositional bias: low complexity. At arginine 2175 the chain carries Omega-N-methylarginine. The segment at 2197 to 2319 (LNPATPVSPH…EVTPKRQVMA (123 aa)) is disordered. Positions 2263–2288 (SLSDWSDSTPSPATATSATAAGALPA) are enriched in low complexity. A compositionally biased stretch (polar residues) spans 2297–2306 (SLPQSQTQLG).

Belongs to the NOTCH family. Heterodimer of a C-terminal fragment N(TM) and a N-terminal fragment N(EC) which are probably linked by disulfide bonds. Interacts with MAML1, MAML2 and MAML3 which act as transcriptional coactivators for NOTCH3. Interacts with PSMA1. Interacts with HIF1AN. Post-translationally, synthesized in the endoplasmic reticulum as an inactive form which is proteolytically cleaved by a furin-like convertase in the trans-Golgi network before it reaches the plasma membrane to yield an active, ligand-accessible form. Cleavage results in a C-terminal fragment N(TM) and a N-terminal fragment N(EC). Following ligand binding, it is cleaved by TNF-alpha converting enzyme (TACE) to yield a membrane-associated intermediate fragment called notch extracellular truncation (NEXT). This fragment is then cleaved by presenilin dependent gamma-secretase to release a notch-derived peptide containing the intracellular domain (NICD) from the membrane. Phosphorylated. In terms of processing, hydroxylated by HIF1AN. In terms of tissue distribution, expressed in postnatal central nervous system (CNS) germinal zones and, in early postnatal life, within numerous cells throughout the CNS. It is more highly localized to ventricular germinal zones.

It is found in the cell membrane. It localises to the nucleus. Functionally, functions as a receptor for membrane-bound ligands Jagged1, Jagged2 and Delta1 to regulate cell-fate determination. Upon ligand activation through the released notch intracellular domain (NICD) it forms a transcriptional activator complex with RBPJ/RBPSUH and activates genes of the enhancer of split locus. Affects the implementation of differentiation, proliferation and apoptotic programs. Acts instructively to control the cell fate determination of CNS multipotent progenitor cells, resulting in astroglial induction and neuron/oligodendrocyte suppression. The protein is Neurogenic locus notch homolog protein 3 (Notch3) of Rattus norvegicus (Rat).